Consider the following 159-residue polypeptide: Probable epoxidase scpX (159 aa).

Positions 1 to 25 (MATLIRLLRLLPVASSSAVLMFALD) are cleaved as a signal peptide. 2 consecutive transmembrane segments (helical) span residues 59–79 (WVLI…LFIS) and 96–116 (LLFS…IAAI). Asn-124 and Asn-136 each carry an N-linked (GlcNAc...) asparagine glycan. The helical transmembrane segment at 139 to 159 (RALLTDLPAWLCFIAAALKAL) threads the bilayer.

This sequence belongs to the epoxidase xenD family.

It is found in the membrane. It participates in mycotoxin biosynthesis. Functionally, probable epoxidase; part of the gene scp cluster that mediates the biosynthesis of a hirsutellone-like compound that has still to be identified. The chain is Probable epoxidase scpX from Mollisia scopiformis (Conifer needle endophyte fungus).